A 341-amino-acid polypeptide reads, in one-letter code: Ribosomal RNA small subunit methyltransferase C (341 aa).

It belongs to the methyltransferase superfamily. RsmC family. In terms of assembly, monomer.

Its subcellular location is the cytoplasm. The enzyme catalyses guanosine(1207) in 16S rRNA + S-adenosyl-L-methionine = N(2)-methylguanosine(1207) in 16S rRNA + S-adenosyl-L-homocysteine + H(+). Its function is as follows. Specifically methylates the guanine in position 1207 of 16S rRNA in the 30S particle. The polypeptide is Ribosomal RNA small subunit methyltransferase C (Pseudoalteromonas translucida (strain TAC 125)).